We begin with the raw amino-acid sequence, 310 residues long: Glutaminase (310 aa).

Residues serine 67, asparagine 118, glutamate 161, asparagine 168, tyrosine 192, tyrosine 244, and valine 262 each contribute to the substrate site.

Belongs to the glutaminase family. As to quaternary structure, homotetramer.

It catalyses the reaction L-glutamine + H2O = L-glutamate + NH4(+). This is Glutaminase from Legionella pneumophila subsp. pneumophila (strain Philadelphia 1 / ATCC 33152 / DSM 7513).